A 251-amino-acid polypeptide reads, in one-letter code: S-acyl fatty acid synthase thioesterase, medium chain (251 aa).

Catalysis depends on residues Ser90 and His226.

This sequence belongs to the thioesterase family.

The catalysed reaction is (9Z)-octadecenoyl-[ACP] + H2O = (9Z)-octadecenoate + holo-[ACP] + H(+). In fatty acid biosynthesis chain termination and release of the free fatty acid product is achieved by hydrolysis of the thio ester by a thioesterase I, a component of the fatty acid synthetase complex. The chain length of the released fatty acid is usually C16. However, in the mammary glands of non-ruminant mammals, and in the uropygial gland of certain waterfowl there exists a second thioesterase which releases medium-chain length fatty acids (C8 to C2). This chain is S-acyl fatty acid synthase thioesterase, medium chain, found in Anas platyrhynchos (Mallard).